The primary structure comprises 360 residues: Xanthohumol 4-O-methyltransferase (360 aa).

Aspartate 227 is a binding site for S-adenosyl-L-methionine. Histidine 266 acts as the Proton acceptor in catalysis.

The protein belongs to the class I-like SAM-binding methyltransferase superfamily. Cation-independent O-methyltransferase family. In terms of assembly, homodimer. Highly expressed in lupulin glands. Detected in cones, male flowers and roots.

It localises to the cytoplasm. The catalysed reaction is xanthohumol + S-adenosyl-L-methionine = 4-O-methylxanthohumol + S-adenosyl-L-homocysteine + H(+). It catalyses the reaction desmethylxanthohumol + S-adenosyl-L-methionine = xanthohumol + S-adenosyl-L-homocysteine + H(+). It carries out the reaction isoliquiritigenin + S-adenosyl-L-methionine = 2'-O-methylisoliquiritigenin + S-adenosyl-L-homocysteine + H(+). The enzyme catalyses trans-resveratrol + S-adenosyl-L-methionine = 3-methoxy-4',5-dihydroxy-trans-stilbene + S-adenosyl-L-homocysteine + H(+). The protein operates within secondary metabolite biosynthesis. With respect to regulation, inhibited by S-adenosyl homocysteine. In terms of biological role, involved in the biosynthesis of prenylated phenolics natural products which contribute to the bitter taste of beer and display broad biological activities. O-methyltransferase with a low substrate selectivity. Methylates chalconaringenin, desmethylxanthohumol, xanthohumol, isoliquiritigenin, butein, 2',4-dihydroxychalcone, resveratrol, genistein and guaiacol. Catalyzes the biosynthesis of 2',4'-dihydroxy-4,6'-dimethoxy-3'-prenylchalcone (4-O-methylxanthohumol). The protein is Xanthohumol 4-O-methyltransferase of Humulus lupulus (European hop).